A 340-amino-acid chain; its full sequence is Cobalt-precorrin-5B C(1)-methyltransferase (340 aa).

This sequence belongs to the CbiD family.

It carries out the reaction Co-precorrin-5B + S-adenosyl-L-methionine = Co-precorrin-6A + S-adenosyl-L-homocysteine. Its pathway is cofactor biosynthesis; adenosylcobalamin biosynthesis; cob(II)yrinate a,c-diamide from sirohydrochlorin (anaerobic route): step 6/10. Catalyzes the methylation of C-1 in cobalt-precorrin-5B to form cobalt-precorrin-6A. In Methanococcoides burtonii (strain DSM 6242 / NBRC 107633 / OCM 468 / ACE-M), this protein is Cobalt-precorrin-5B C(1)-methyltransferase.